Consider the following 112-residue polypeptide: Mediator of RNA polymerase II transcription subunit 22 (112 aa).

Residues 83-112 (KPEDGGEGQLADELLDKIEDTSDGVDKETA) form a disordered region. The span at 96 to 112 (LLDKIEDTSDGVDKETA) shows a compositional bias: basic and acidic residues.

The protein belongs to the Mediator complex subunit 22 family. In terms of assembly, component of the Mediator complex.

The protein resides in the nucleus. In terms of biological role, component of the Mediator complex, a coactivator involved in the regulated transcription of nearly all RNA polymerase II-dependent genes. Mediator functions as a bridge to convey information from gene-specific regulatory proteins to the basal RNA polymerase II transcription machinery. Mediator is recruited to promoters by direct interactions with regulatory proteins and serves as a scaffold for the assembly of a functional preinitiation complex with RNA polymerase II and the general transcription factors. This chain is Mediator of RNA polymerase II transcription subunit 22 (SRB6), found in Yarrowia lipolytica (strain CLIB 122 / E 150) (Yeast).